Reading from the N-terminus, the 213-residue chain is Thymidylate kinase (213 aa).

10–17 is an ATP binding site; it reads GLEGAGKT.

It belongs to the thymidylate kinase family.

It carries out the reaction dTMP + ATP = dTDP + ADP. Its function is as follows. Phosphorylation of dTMP to form dTDP in both de novo and salvage pathways of dTTP synthesis. In Escherichia coli O157:H7 (strain EC4115 / EHEC), this protein is Thymidylate kinase.